Here is a 237-residue protein sequence, read N- to C-terminus: Demethylmenaquinone methyltransferase (237 aa).

Residues Thr-58, Asp-79, and 106–107 (NA) each bind S-adenosyl-L-methionine.

This sequence belongs to the class I-like SAM-binding methyltransferase superfamily. MenG/UbiE family.

It catalyses the reaction a 2-demethylmenaquinol + S-adenosyl-L-methionine = a menaquinol + S-adenosyl-L-homocysteine + H(+). It participates in quinol/quinone metabolism; menaquinone biosynthesis; menaquinol from 1,4-dihydroxy-2-naphthoate: step 2/2. Its function is as follows. Methyltransferase required for the conversion of demethylmenaquinol (DMKH2) to menaquinol (MKH2). This Anoxybacillus flavithermus (strain DSM 21510 / WK1) protein is Demethylmenaquinone methyltransferase.